The primary structure comprises 427 residues: Glutamyl-tRNA reductase (427 aa).

Residues 48–51 (TCNR), S99, 104–106 (EDQ), and Q110 contribute to the substrate site. The active-site Nucleophile is C49. 179–184 (GAGEMG) is an NADP(+) binding site.

The protein belongs to the glutamyl-tRNA reductase family. In terms of assembly, homodimer.

The enzyme catalyses (S)-4-amino-5-oxopentanoate + tRNA(Glu) + NADP(+) = L-glutamyl-tRNA(Glu) + NADPH + H(+). Its pathway is porphyrin-containing compound metabolism; protoporphyrin-IX biosynthesis; 5-aminolevulinate from L-glutamyl-tRNA(Glu): step 1/2. In terms of biological role, catalyzes the NADPH-dependent reduction of glutamyl-tRNA(Glu) to glutamate 1-semialdehyde (GSA). The chain is Glutamyl-tRNA reductase from Methanocella arvoryzae (strain DSM 22066 / NBRC 105507 / MRE50).